The primary structure comprises 241 residues: Major prion protein (241 aa).

The first 15 residues, 1–15, serve as a signal peptide directing secretion; sequence MLVLFVATWSDLGLC. The interaction with ADGRG6 stretch occupies residues 16–31; it reads KKRPKPGGWNTGGSRY. An interaction with GRB2, ERI3 and SYN1 region spans residues 16 to 223; the sequence is KKRPKPGGWN…ESQAYYQRGS (208 aa). Residues 18–101 are disordered; the sequence is RPKPGGWNTG…WHKPNKPKTS (84 aa). Repeat copies occupy residues 44 to 52, 53 to 60, 61 to 68, 69 to 76, and 77 to 84. The segment at 44-84 is 5 X 8 AA tandem repeats of P-H-G-G-G-W-G-Q; it reads PQGGGGWGQPHGGGWGQPHGGGWGQPHGGGWGQPHGGGWGQ. The span at 45–88 shows a compositional bias: gly residues; sequence QGGGGWGQPHGGGWGQPHGGGWGQPHGGGWGQPHGGGWGQGGGT. Positions 54, 55, 56, 62, 63, 64, 70, 71, 72, 78, 79, and 80 each coordinate Cu(2+). The span at 91 to 101 shows a compositional bias: basic residues; sequence QWHKPNKPKTS. Cys172 and Cys207 are oxidised to a cystine. Asn174 and Asn190 each carry an N-linked (GlcNAc...) asparagine glycan. Ser223 carries GPI-anchor amidated serine lipidation. Residues 224–241 constitute a propeptide, removed in mature form; the sequence is SMVLFSSPPVILLISFLI.

This sequence belongs to the prion family. Monomer and homodimer. Has a tendency to aggregate into amyloid fibrils containing a cross-beta spine, formed by a steric zipper of superposed beta-strands. Soluble oligomers may represent an intermediate stage on the path to fibril formation. Copper binding may promote oligomerization. Interacts with GRB2, APP, ERI3/PRNPIP and SYN1. Mislocalized cytosolically exposed PrP interacts with MGRN1; this interaction alters MGRN1 subcellular location and causes lysosomal enlargement. Interacts with APP. Interacts with KIAA1191. Interacts with ADGRG6.

It is found in the cell membrane. The protein localises to the golgi apparatus. Its function is as follows. Its primary physiological function is unclear. May play a role in neuronal development and synaptic plasticity. May be required for neuronal myelin sheath maintenance. May promote myelin homeostasis through acting as an agonist for ADGRG6 receptor. May play a role in iron uptake and iron homeostasis. Soluble oligomers are toxic to cultured neuroblastoma cells and induce apoptosis (in vitro). Association with GPC1 (via its heparan sulfate chains) targets PRNP to lipid rafts. Also provides Cu(2+) or Zn(2+) for the ascorbate-mediated GPC1 deaminase degradation of its heparan sulfate side chains. The sequence is that of Major prion protein (PRNP) from Mandrillus sphinx (Mandrill).